Reading from the N-terminus, the 293-residue chain is Undecaprenyl-diphosphatase (293 aa).

7 helical membrane-spanning segments follow: residues 3–23 (IALA…EFLP), 43–63 (KGKI…CWEF), 85–105 (LNVI…GKAI), 109–129 (LFNP…ILWA), 203–223 (VATE…TVYE), 238–258 (IFGI…RWLL), and 269–289 (FAWY…THLI).

Belongs to the UppP family.

Its subcellular location is the cell inner membrane. The enzyme catalyses di-trans,octa-cis-undecaprenyl diphosphate + H2O = di-trans,octa-cis-undecaprenyl phosphate + phosphate + H(+). Functionally, catalyzes the dephosphorylation of undecaprenyl diphosphate (UPP). Confers resistance to bacitracin. This is Undecaprenyl-diphosphatase from Ralstonia nicotianae (strain ATCC BAA-1114 / GMI1000) (Ralstonia solanacearum).